Reading from the N-terminus, the 708-residue chain is uncharacterized protein (708 aa).

Disordered stretches follow at residues 1–79, 119–301, 349–390, and 410–461; these read MHAR…RRSS, AGEF…IHQR, YLSH…GDEN, and SNSF…KRQR. Residues 65–74 show a composition bias toward pro residues; that stretch reads LPPPLPPPPV. Residues 238 to 249 are compositionally biased toward polar residues; it reads DEAQSKTGSSSA. Residues 260–274 show a composition bias toward low complexity; the sequence is SKVSEGSSSLSAGSG. Over residues 410–419 the composition is skewed to polar residues; sequence SNSFPSSILR. Residues 442-461 are compositionally biased toward basic and acidic residues; the sequence is VGEKRPGEGSDLEEGSKRQR.

This is an uncharacterized protein from Arabidopsis thaliana (Mouse-ear cress).